Consider the following 119-residue polypeptide: Protein MRP-126 (119 aa).

2 consecutive EF-hand domains span residues 23–58 (DVFH…LKHV) and 59–94 (KNQV…VTVA). The Ca(2+) site is built by threonine 37, glutamate 42, aspartate 72, asparagine 74, aspartate 76, glutamine 78, and glutamate 83.

The protein belongs to the S-100 family. Expressed in v-myb-transformed myelomonocytic cells.

This chain is Protein MRP-126, found in Gallus gallus (Chicken).